The primary structure comprises 263 residues: uncharacterized protein (263 aa).

A WD repeat occupies 53 to 89; that stretch reads SAVTASKFSPDGRWLVNLTDQGYVQLWDVHKGERVKT.

This is an uncharacterized protein from Deinococcus radiodurans (strain ATCC 13939 / DSM 20539 / JCM 16871 / CCUG 27074 / LMG 4051 / NBRC 15346 / NCIMB 9279 / VKM B-1422 / R1).